A 328-amino-acid chain; its full sequence is MIYQMQMPTKIDVDEATHTGSFGRFIAQPLERGYGVTLGNAMRRVLLASLPGTAITGIKIDGVFHEFSTIDGVREDVPEIVLNLKKVRFKSNCKRSCKTTLTLAGPKDFLAGDIVAQEGEFEVLNKDLHIATINSEATVTIDIYIGRGRGYVPAEENRSDGMPIGFIAIDSIYTPIKNVKLTVENTRVGQKTDYEKMILDVETDGSITPDDAISLAGKIINDHITFFANFSPTEEEFSEEEYKQLDDEFESMRKLLQTKIEDLDLSVRSHNCLRLAEIDSLGDLVSRREEELLNYKNFGKKSLTELKEQLEKFNLKFGMDITRYQLKG.

The tract at residues 1–231 (MIYQMQMPTK…DHITFFANFS (231 aa)) is alpha N-terminal domain (alpha-NTD). Residues 247–328 (DEFESMRKLL…MDITRYQLKG (82 aa)) are alpha C-terminal domain (alpha-CTD).

The protein belongs to the RNA polymerase alpha chain family. As to quaternary structure, homodimer. The RNAP catalytic core consists of 2 alpha, 1 beta, 1 beta' and 1 omega subunit. When a sigma factor is associated with the core the holoenzyme is formed, which can initiate transcription.

The enzyme catalyses RNA(n) + a ribonucleoside 5'-triphosphate = RNA(n+1) + diphosphate. Functionally, DNA-dependent RNA polymerase catalyzes the transcription of DNA into RNA using the four ribonucleoside triphosphates as substrates. The polypeptide is DNA-directed RNA polymerase subunit alpha (Chlorobaculum tepidum (strain ATCC 49652 / DSM 12025 / NBRC 103806 / TLS) (Chlorobium tepidum)).